A 310-amino-acid polypeptide reads, in one-letter code: p-hydroxybenzoic acid efflux pump subunit AaeA (310 aa).

A helical transmembrane segment spans residues 12–32 (AITVVLVILAFIAIFNAWVYY).

Belongs to the membrane fusion protein (MFP) (TC 8.A.1) family.

The protein resides in the cell inner membrane. In terms of biological role, forms an efflux pump with AaeB. This Escherichia coli O8 (strain IAI1) protein is p-hydroxybenzoic acid efflux pump subunit AaeA.